The primary structure comprises 205 residues: Protein N-terminal glutamine amidohydrolase (205 aa).

Catalysis depends on residues C20, H74, and D90.

The protein belongs to the NTAQ1 family. In terms of assembly, monomer.

It carries out the reaction N-terminal L-glutaminyl-[protein] + H2O = N-terminal L-glutamyl-[protein] + NH4(+). Mediates the side-chain deamidation of N-terminal glutamine residues to glutamate, an important step in N-end rule pathway of protein degradation. Conversion of the resulting N-terminal glutamine to glutamate renders the protein susceptible to arginylation, polyubiquitination and degradation as specified by the N-end rule. Does not act on substrates with internal or C-terminal glutamine and does not act on non-glutamine residues in any position. The polypeptide is Protein N-terminal glutamine amidohydrolase (tun) (Drosophila erecta (Fruit fly)).